A 106-amino-acid polypeptide reads, in one-letter code: Protein translocase subunit SecE (106 aa).

The next 2 helical transmembrane spans lie at 20–40 (LPIR…LAAI) and 75–95 (IVIG…SIIV).

It belongs to the SecE/SEC61-gamma family. In terms of assembly, component of the Sec protein translocase complex. Heterotrimer consisting of SecY, SecE and SecG subunits. The heterotrimers can form oligomers, although 1 heterotrimer is thought to be able to translocate proteins. Interacts with the ribosome. Interacts with SecDF, and other proteins may be involved. Interacts with SecA.

The protein localises to the cell inner membrane. Its function is as follows. Essential subunit of the Sec protein translocation channel SecYEG. Clamps together the 2 halves of SecY. May contact the channel plug during translocation. This chain is Protein translocase subunit SecE, found in Haemophilus influenzae (strain ATCC 51907 / DSM 11121 / KW20 / Rd).